Consider the following 159-residue polypeptide: ATP synthase subunit b (159 aa).

Residues 7 to 27 (TFVWTIINFLLLLVVLSYFLF) traverse the membrane as a helical segment.

Belongs to the ATPase B chain family. As to quaternary structure, F-type ATPases have 2 components, F(1) - the catalytic core - and F(0) - the membrane proton channel. F(1) has five subunits: alpha(3), beta(3), gamma(1), delta(1), epsilon(1). F(0) has three main subunits: a(1), b(2) and c(10-14). The alpha and beta chains form an alternating ring which encloses part of the gamma chain. F(1) is attached to F(0) by a central stalk formed by the gamma and epsilon chains, while a peripheral stalk is formed by the delta and b chains.

The protein localises to the cell membrane. F(1)F(0) ATP synthase produces ATP from ADP in the presence of a proton or sodium gradient. F-type ATPases consist of two structural domains, F(1) containing the extramembraneous catalytic core and F(0) containing the membrane proton channel, linked together by a central stalk and a peripheral stalk. During catalysis, ATP synthesis in the catalytic domain of F(1) is coupled via a rotary mechanism of the central stalk subunits to proton translocation. In terms of biological role, component of the F(0) channel, it forms part of the peripheral stalk, linking F(1) to F(0). The sequence is that of ATP synthase subunit b from Clostridium novyi (strain NT).